The sequence spans 276 residues: Undecaprenyl-diphosphatase (276 aa).

Helical transmembrane passes span 84–104, 115–135, 188–208, 222–242, and 250–270; these read YRLG…GLLF, LWVV…AEYL, FGFL…LPDA, QLLV…SWFL, and MYWF…LLAT.

The protein belongs to the UppP family.

It localises to the cell membrane. It catalyses the reaction di-trans,octa-cis-undecaprenyl diphosphate + H2O = di-trans,octa-cis-undecaprenyl phosphate + phosphate + H(+). Catalyzes the dephosphorylation of undecaprenyl diphosphate (UPP). Confers resistance to bacitracin. The protein is Undecaprenyl-diphosphatase of Mycobacterium ulcerans (strain Agy99).